Reading from the N-terminus, the 153-residue chain is Large ribosomal subunit protein uL15 (153 aa).

Residues 1-42 (MRLNTIKPGMGSTKPRRRVGRGIGSGLGKTCGRGHKGQKSRA) form a disordered region. Residues 21 to 31 (RGIGSGLGKTC) are compositionally biased toward gly residues.

This sequence belongs to the universal ribosomal protein uL15 family. In terms of assembly, part of the 50S ribosomal subunit.

Binds to the 23S rRNA. The polypeptide is Large ribosomal subunit protein uL15 (Nitrosomonas eutropha (strain DSM 101675 / C91 / Nm57)).